A 402-amino-acid polypeptide reads, in one-letter code: Speedy protein E5 (402 aa).

The interval 1-89 (MDRTETRFRK…EEPEKELAPE (89 aa)) is disordered. The span at 16-39 (EKITTSRQPQPQNEQSPQRSTSGY) shows a compositional bias: polar residues. Acidic residues predominate over residues 76–89 (DESAEEPEKELAPE).

Belongs to the Speedy/Ringo family.

This Homo sapiens (Human) protein is Speedy protein E5 (SPDYE5).